The primary structure comprises 191 residues: Potassium-transporting ATPase KdpC subunit (191 aa).

The helical transmembrane segment at valine 13–leucine 35 threads the bilayer. The tract at residues serine 112–serine 132 is disordered.

The protein belongs to the KdpC family. The system is composed of three essential subunits: KdpA, KdpB and KdpC.

The protein resides in the cell inner membrane. In terms of biological role, part of the high-affinity ATP-driven potassium transport (or Kdp) system, which catalyzes the hydrolysis of ATP coupled with the electrogenic transport of potassium into the cytoplasm. This subunit acts as a catalytic chaperone that increases the ATP-binding affinity of the ATP-hydrolyzing subunit KdpB by the formation of a transient KdpB/KdpC/ATP ternary complex. The chain is Potassium-transporting ATPase KdpC subunit from Allorhizobium ampelinum (strain ATCC BAA-846 / DSM 112012 / S4) (Agrobacterium vitis (strain S4)).